The primary structure comprises 212 residues: Uracil phosphoribosyltransferase (212 aa).

Residues Arg78, Arg103, and 130–138 each bind 5-phospho-alpha-D-ribose 1-diphosphate; that span reads DPMLATGSS. Uracil is bound by residues Ile193 and 198-200; that span reads GDA. Residue Asp199 coordinates 5-phospho-alpha-D-ribose 1-diphosphate.

Belongs to the UPRTase family. Mg(2+) is required as a cofactor.

It catalyses the reaction UMP + diphosphate = 5-phospho-alpha-D-ribose 1-diphosphate + uracil. It functions in the pathway pyrimidine metabolism; UMP biosynthesis via salvage pathway; UMP from uracil: step 1/1. Its activity is regulated as follows. Allosterically activated by GTP. Its function is as follows. Catalyzes the conversion of uracil and 5-phospho-alpha-D-ribose 1-diphosphate (PRPP) to UMP and diphosphate. The polypeptide is Uracil phosphoribosyltransferase (Pseudomonas fluorescens (strain ATCC BAA-477 / NRRL B-23932 / Pf-5)).